Reading from the N-terminus, the 56-residue chain is Photosystem II reaction center X protein (56 aa).

The helical transmembrane segment at 27–47 (IGSFLAAGALIVAPAAAALIW) threads the bilayer.

This sequence belongs to the PsbX family. Type 2 subfamily. In terms of assembly, PSII consists of a core antenna complex that captures photons, and an electron transfer chain that converts photonic excitation into a charge separation. PSII forms dimeric complexes.

It localises to the cellular thylakoid membrane. In terms of biological role, involved in the binding and/or turnover of quinones at the Q(B) site of Photosystem II. In Prochlorococcus marinus (strain NATL2A), this protein is Photosystem II reaction center X protein.